We begin with the raw amino-acid sequence, 172 residues long: Shikimate kinase (172 aa).

11–16 (GAGKST) serves as a coordination point for ATP. Ser-15 serves as a coordination point for Mg(2+). Residues Asp-33, Arg-57, and Gly-79 each coordinate substrate. Residue Arg-117 participates in ATP binding. Substrate is bound at residue Arg-136. An ATP-binding site is contributed by Arg-153.

It belongs to the shikimate kinase family. As to quaternary structure, monomer. The cofactor is Mg(2+).

Its subcellular location is the cytoplasm. It catalyses the reaction shikimate + ATP = 3-phosphoshikimate + ADP + H(+). It participates in metabolic intermediate biosynthesis; chorismate biosynthesis; chorismate from D-erythrose 4-phosphate and phosphoenolpyruvate: step 5/7. Catalyzes the specific phosphorylation of the 3-hydroxyl group of shikimic acid using ATP as a cosubstrate. The chain is Shikimate kinase from Pseudomonas putida (strain ATCC 700007 / DSM 6899 / JCM 31910 / BCRC 17059 / LMG 24140 / F1).